The following is a 631-amino-acid chain: Chaperone protein DnaK (631 aa).

Threonine 197 carries the post-translational modification Phosphothreonine; by autocatalysis. The segment at 599–631 (AQSDAGAAGSASEENTTSNEKVVDADFEDVEKK) is disordered. A compositionally biased stretch (low complexity) spans 603–612 (AGAAGSASEE).

Belongs to the heat shock protein 70 family.

Acts as a chaperone. The polypeptide is Chaperone protein DnaK (Rickettsia bellii (strain RML369-C)).